The sequence spans 233 residues: Lipoprotein-releasing system ATP-binding protein LolD (233 aa).

An ABC transporter domain is found at 9 to 233 (LAINAVSKVF…GILSQSETHR (225 aa)). 45 to 52 (GSSGSGKS) is a binding site for ATP.

The protein belongs to the ABC transporter superfamily. Lipoprotein translocase (TC 3.A.1.125) family. As to quaternary structure, the complex is composed of two ATP-binding proteins (LolD) and two transmembrane proteins (LolC and LolE).

Its subcellular location is the cell inner membrane. Functionally, part of the ABC transporter complex LolCDE involved in the translocation of mature outer membrane-directed lipoproteins, from the inner membrane to the periplasmic chaperone, LolA. Responsible for the formation of the LolA-lipoprotein complex in an ATP-dependent manner. The protein is Lipoprotein-releasing system ATP-binding protein LolD of Shewanella denitrificans (strain OS217 / ATCC BAA-1090 / DSM 15013).